Consider the following 236-residue polypeptide: Eukaryotic translation initiation factor 3 subunit J (236 aa).

Disordered stretches follow at residues Met1 to Met88 and Ser188 to Met236. Positions Gly28–Lys46 are enriched in acidic residues. Composition is skewed to basic and acidic residues over residues Asp47–Val58, Ala68–Met88, and Ser188–Asn197. Coiled coils occupy residues Lys61–Ala112 and Ala174–Val209. Residues Ser201–Ser210 show a composition bias toward basic residues.

This sequence belongs to the eIF-3 subunit J family. Component of the eukaryotic translation initiation factor 3 (eIF-3) complex. The eIF-3 complex interacts with pix.

Its subcellular location is the cytoplasm. In terms of biological role, component of the eukaryotic translation initiation factor 3 (eIF-3) complex, which is involved in protein synthesis of a specialized repertoire of mRNAs and, together with other initiation factors, stimulates binding of mRNA and methionyl-tRNAi to the 40S ribosome. The eIF-3 complex specifically targets and initiates translation of a subset of mRNAs involved in cell proliferation. The chain is Eukaryotic translation initiation factor 3 subunit J from Drosophila virilis (Fruit fly).